Here is a 320-residue protein sequence, read N- to C-terminus: Cytochrome f (320 aa).

Positions 1–35 (MQNRNFNNLIIKWAIRLISIMIIINTIFWSSISEA) are cleaved as a signal peptide. Heme contacts are provided by phenylalanine 36, cysteine 56, cysteine 59, and histidine 60. The chain crosses the membrane as a helical span at residues 286 to 305 (IQGLLLFFGSVILAQIFLVL).

This sequence belongs to the cytochrome f family. The 4 large subunits of the cytochrome b6-f complex are cytochrome b6, subunit IV (17 kDa polypeptide, petD), cytochrome f and the Rieske protein, while the 4 small subunits are PetG, PetL, PetM and PetN. The complex functions as a dimer. Heme serves as cofactor.

It localises to the plastid. The protein localises to the chloroplast thylakoid membrane. In terms of biological role, component of the cytochrome b6-f complex, which mediates electron transfer between photosystem II (PSII) and photosystem I (PSI), cyclic electron flow around PSI, and state transitions. The polypeptide is Cytochrome f (petA) (Marchantia polymorpha (Common liverwort)).